A 734-amino-acid chain; its full sequence is Photosystem I P700 chlorophyll a apoprotein A2 (734 aa).

8 helical membrane passes run 46 to 69 (IFASHFGQLAIIFLWTSGNLFHVA), 135 to 158 (LYTGALFLLFLSAISLIAGWLHLQ), 175 to 199 (LNHHLSGLFGVSSLAWTGHLVHVAI), 273 to 291 (MAHHHLAIAFIFLVAGHMY), 330 to 353 (IHFQLGLALASLGVITSLVAQHMY), 369 to 395 (AALYTHHQYIAGFIMTGAFAHGAIFFI), 417 to 439 (AIKSHLSWASLFLGFHTLGLYVH), and 517 to 535 (FLVHHAIALGLHTTTLILV). Positions 559 and 568 each coordinate [4Fe-4S] cluster. 2 helical membrane-spanning segments follow: residues 575-596 (AFYLAVFWMLNTIGWVTFYWHW) and 643-665 (LSVWAWMFLFGHLVWATGFMFLI). Chlorophyll a contacts are provided by His654, Met662, and Tyr670. Trp671 lines the phylloquinone pocket. The helical transmembrane segment at 707-727 (LVGLAHFSVGYIFTYAAFLIA) threads the bilayer.

It belongs to the PsaA/PsaB family. The PsaA/B heterodimer binds the P700 chlorophyll special pair and subsequent electron acceptors. PSI consists of a core antenna complex that captures photons, and an electron transfer chain that converts photonic excitation into a charge separation. The eukaryotic PSI reaction center is composed of at least 11 subunits. P700 is a chlorophyll a/chlorophyll a' dimer, A0 is one or more chlorophyll a, A1 is one or both phylloquinones and FX is a shared 4Fe-4S iron-sulfur center. serves as cofactor.

It localises to the plastid. Its subcellular location is the chloroplast thylakoid membrane. The catalysed reaction is reduced [plastocyanin] + hnu + oxidized [2Fe-2S]-[ferredoxin] = oxidized [plastocyanin] + reduced [2Fe-2S]-[ferredoxin]. Its function is as follows. PsaA and PsaB bind P700, the primary electron donor of photosystem I (PSI), as well as the electron acceptors A0, A1 and FX. PSI is a plastocyanin-ferredoxin oxidoreductase, converting photonic excitation into a charge separation, which transfers an electron from the donor P700 chlorophyll pair to the spectroscopically characterized acceptors A0, A1, FX, FA and FB in turn. Oxidized P700 is reduced on the lumenal side of the thylakoid membrane by plastocyanin. This is Photosystem I P700 chlorophyll a apoprotein A2 from Chloranthus spicatus (Chulantree).